A 427-amino-acid polypeptide reads, in one-letter code: 5-hydroxybenzimidazole synthase BzaB (427 aa).

The protein belongs to the ThiC family. 5-hydroxybenzimidazole synthase subfamily. Requires [4Fe-4S] cluster as cofactor.

The enzyme catalyses 5-amino-1-(5-phospho-beta-D-ribosyl)imidazole + AH2 + S-adenosyl-L-methionine = 5-hydroxybenzimidazole + 5'-deoxyadenosine + formate + L-methionine + A + NH4(+) + phosphate + 2 H(+). Its pathway is cofactor biosynthesis; adenosylcobalamin biosynthesis. In terms of biological role, together with BzaA, catalyzes the conversion of aminoimidazole ribotide (AIR) to 5-hydroxybenzimidazole (5-HBI) in a radical S-adenosyl-L-methionine (SAM)-dependent reaction. Is thus involved in the anaerobic biosynthesis of dimethylbenzimidazole (DMB), the lower axial ligand of vitamin B12 (cobalamin). Requires BzaA for catalytic activity, as BzaB alone displays no activity. This chain is 5-hydroxybenzimidazole synthase BzaB, found in Eubacterium limosum.